The following is an 88-amino-acid chain: Homeobox protein knotted-1-like 11 (88 aa).

The 21-residue stretch at 4 to 24 (ELKEMLLKKYSGCLSRLRSEF) folds into the ELK domain. The homeobox; TALE-type DNA-binding region spans 25 to 88 (LKKRKKGKLP…NQRKRHWKPS (64 aa)).

The protein belongs to the TALE/KNOX homeobox family.

It is found in the nucleus. Its function is as follows. Probably binds to the DNA sequence 5'-TGAC-3'. This is Homeobox protein knotted-1-like 11 (KNOX11) from Zea mays (Maize).